Consider the following 453-residue polypeptide: Glutamyl-tRNA(Gln) amidotransferase subunit A (453 aa).

Active-site charge relay system residues include Lys53 and Ser128. Ser152 (acyl-ester intermediate) is an active-site residue.

It belongs to the amidase family. GatA subfamily. As to quaternary structure, heterotrimer of A, B and C subunits.

The catalysed reaction is L-glutamyl-tRNA(Gln) + L-glutamine + ATP + H2O = L-glutaminyl-tRNA(Gln) + L-glutamate + ADP + phosphate + H(+). Functionally, allows the formation of correctly charged Gln-tRNA(Gln) through the transamidation of misacylated Glu-tRNA(Gln) in organisms which lack glutaminyl-tRNA synthetase. The reaction takes place in the presence of glutamine and ATP through an activated gamma-phospho-Glu-tRNA(Gln). The polypeptide is Glutamyl-tRNA(Gln) amidotransferase subunit A (Helicobacter pylori (strain P12)).